We begin with the raw amino-acid sequence, 128 residues long: Large ribosomal subunit protein bL12 (128 aa).

It belongs to the bacterial ribosomal protein bL12 family. Homodimer. Part of the ribosomal stalk of the 50S ribosomal subunit. Forms a multimeric L10(L12)X complex, where L10 forms an elongated spine to which 2 to 4 L12 dimers bind in a sequential fashion. Binds GTP-bound translation factors.

Its function is as follows. Forms part of the ribosomal stalk which helps the ribosome interact with GTP-bound translation factors. Is thus essential for accurate translation. In Synechococcus sp. (strain CC9311), this protein is Large ribosomal subunit protein bL12.